Consider the following 363-residue polypeptide: Endopolygalacturonase B (363 aa).

The N-terminal stretch at 1–20 (MQLLQSSVIAATVGAALVAA) is a signal peptide. Positions 21-28 (VPVELKAR) are excised as a propeptide. Residues cysteine 31 and cysteine 46 are joined by a disulfide bond. 6 PbH1 repeats span residues 158–187 (SDNL…DVGS), 188–209 (STYI…AINS), 210–230 (GSHI…SIGS), 239–260 (VEDV…RIKT), 268–290 (VSNV…IVEQ), and 302–347 (TNGI…SITG). Asparagine 162 carries an N-linked (GlcNAc...) asparagine glycan. Aspartate 202 acts as the Proton donor in catalysis. Cysteines 204 and 220 form a disulfide. Residue histidine 224 is part of the active site. Intrachain disulfides connect cysteine 330–cysteine 335 and cysteine 354–cysteine 363. An N-linked (GlcNAc...) asparagine glycan is attached at asparagine 356.

It belongs to the glycosyl hydrolase 28 family.

Its subcellular location is the secreted. It carries out the reaction (1,4-alpha-D-galacturonosyl)n+m + H2O = (1,4-alpha-D-galacturonosyl)n + (1,4-alpha-D-galacturonosyl)m.. Functionally, involved in maceration and soft-rotting of plant tissue. Hydrolyzes the 1,4-alpha glycosidic bonds of de-esterified pectate in the smooth region of the plant cell wall. The polypeptide is Endopolygalacturonase B (pgaB) (Aspergillus oryzae (strain ATCC 42149 / RIB 40) (Yellow koji mold)).